A 213-amino-acid polypeptide reads, in one-letter code: Redox-sensing transcriptional repressor Rex (213 aa).

The segment at residues 16–55 (IYYRYLRLLSNSGKNRVSSTELAEAVKVDSATIRRDFSYF) is a DNA-binding region (H-T-H motif). Residue 90-95 (GVGNLG) coordinates NAD(+).

The protein belongs to the transcriptional regulatory Rex family. In terms of assembly, homodimer.

The protein localises to the cytoplasm. Functionally, modulates transcription in response to changes in cellular NADH/NAD(+) redox state. This chain is Redox-sensing transcriptional repressor Rex, found in Ligilactobacillus salivarius (strain UCC118) (Lactobacillus salivarius).